We begin with the raw amino-acid sequence, 475 residues long: Glucose-6-phosphate 1-dehydrogenase gcd1 (475 aa).

Positions 42 and 146 each coordinate NADP(+). K146, E214, and D233 together coordinate D-glucose 6-phosphate. The active-site Proton acceptor is H238. K332 serves as a coordination point for D-glucose 6-phosphate. Residues R342 and R365 each coordinate NADP(+).

This sequence belongs to the glucose-6-phosphate dehydrogenase family.

The protein localises to the cytoplasm. The enzyme catalyses D-glucose 6-phosphate + NADP(+) = 6-phospho-D-glucono-1,5-lactone + NADPH + H(+). Its pathway is carbohydrate degradation; pentose phosphate pathway; D-ribulose 5-phosphate from D-glucose 6-phosphate (oxidative stage): step 1/3. In terms of biological role, catalyzes the rate-limiting step of the oxidative pentose-phosphate pathway, which represents a route for the dissimilation of carbohydrates besides glycolysis. The main function of this enzyme is to provide reducing power (NADPH) and pentose phosphates for fatty acid and nucleic acid synthesis. In Schizosaccharomyces pombe (strain 972 / ATCC 24843) (Fission yeast), this protein is Glucose-6-phosphate 1-dehydrogenase gcd1.